The chain runs to 227 residues: Large ribosomal subunit protein uL3 (227 aa).

It belongs to the universal ribosomal protein uL3 family. In terms of assembly, part of the 50S ribosomal subunit. Forms a cluster with proteins L14 and L19.

Its function is as follows. One of the primary rRNA binding proteins, it binds directly near the 3'-end of the 23S rRNA, where it nucleates assembly of the 50S subunit. This Persephonella marina (strain DSM 14350 / EX-H1) protein is Large ribosomal subunit protein uL3.